The chain runs to 265 residues: Mlc titration factor A (265 aa).

Zn(2+) contacts are provided by His-111, His-148, His-152, and Glu-211.

This sequence belongs to the MtfA family. In terms of assembly, interacts with Mlc. Requires Zn(2+) as cofactor.

The protein localises to the cytoplasm. Its function is as follows. Involved in the modulation of the activity of the glucose-phosphotransferase system (glucose-PTS). Interacts with the transcriptional repressor Mlc, preventing its interaction with DNA and leading to the modulation of expression of genes regulated by Mlc, including ptsG, which encodes the PTS system glucose-specific EIICB component. In terms of biological role, shows zinc-dependent metallopeptidase activity. This chain is Mlc titration factor A, found in Escherichia coli O7:K1 (strain IAI39 / ExPEC).